Here is a 396-residue protein sequence, read N- to C-terminus: G-protein coupled receptor 84 (396 aa).

At 1-21 the chain is on the extracellular side; that stretch reads MWNSSDANFSCYHESVLGYRY. Asn-3 and Asn-8 each carry an N-linked (GlcNAc...) asparagine glycan. A helical membrane pass occupies residues 22–42; that stretch reads FAVIWGVAVAVTGTVGNVLTL. Topologically, residues 43-57 are cytoplasmic; that stretch reads LALAIRPKLRTRFNL. The chain crosses the membrane as a helical span at residues 58 to 78; it reads LIANLTLADLLYCTLLQPFSV. Topologically, residues 79–94 are extracellular; that stretch reads DTYLHLHWRTGAVFCR. The chain crosses the membrane as a helical span at residues 95–115; sequence IFGLLLFTSNSVSILTLCLIA. The Cytoplasmic portion of the chain corresponds to 116 to 135; sequence LGRYLLIAHPKLFPQVFSAK. The chain crosses the membrane as a helical span at residues 136 to 156; the sequence is GIVLALVGSWVVGVTSFAPLW. The Extracellular segment spans residues 157–180; sequence NVFVLVPVVCTCSFDRMRGRPYTT. The helical transmembrane segment at 181–201 threads the bilayer; it reads ILMGIYFVLGLSSVGVFYCLI. Residues 202-320 are Cytoplasmic-facing; that stretch reads HRQVKRAARA…PSEFGKVTRM (119 aa). Residues Ser-221 and Ser-224 each carry the phosphoserine modification. The segment at 241–310 is disordered; it reads LDSGVASRGP…TAGARRATDA (70 aa). Polar residues predominate over residues 253–269; that stretch reads GISSEPVSAATTQTLEG. 2 positions are modified to phosphothreonine: Thr-263 and Thr-264. Basic and acidic residues predominate over residues 290–308; the sequence is SLPEVHRKPRETAGARRAT. Residues 321 to 341 form a helical membrane-spanning segment; it reads CFAVFLCFALSYIPFLLLNIL. Residues 342–352 lie on the Extracellular side of the membrane; sequence DARGRAPRVVH. The helical transmembrane segment at 353–373 threads the bilayer; it reads MVAANLTWLNSCINPVLYAAM. At 374-396 the chain is on the cytoplasmic side; sequence NRQFRHAYGSILKRGPQSFRRFH.

This sequence belongs to the G-protein coupled receptor 1 family. Interacts with ARRB2 and ARR3. In terms of processing, phosphorylated by a subset of GPR84-activating ligands. Constitutively phosphorylated at Ser-221 and Ser-224 in the absence of 2-HTP. By contrast, Thr-263 and Thr-264 are phosphorylated only following prior cell treatment with 2-HTP. In terms of tissue distribution, expressed predominantly in hematopoietic tissues. Expressed mainly in the bone marrow with transcripts also detected in spleen, the lymph node, liver and the lung.

The protein resides in the cell membrane. In terms of biological role, g protein-coupled receptor that responds endogenously to dietary fatty acids or nutrient, specifically medium-chain free fatty acid (FFA) with carbon chain lengths of C9 to C14. Capric acid (C10:0), undecanoic acid (C11:0) and lauric acid (C12:0) are the most potent agonists. In immune cells, functions as a pro-inflammatory receptor via 6-OAU and promotes the expression of pro-inflammatory mediators such as TNFalpha, IL-6 and IL-12B as well as stimulating chemotactic responses through activation of signaling mediators AKT, ERK and NF-kappa-B (by sim). In addition, triggers increased bacterial adhesion and phagocytosis in macrophages and regulates pro-inflammatory function via enhancing NLRP3 inflammasome activation. Also plays an important role in inflammation by modulating neutrophil functions. Mechanistically, promotes neutrophil chemotaxis, reactive oxygen species (ROS) production and degranulation via LYN-AKT/ERK pathway. To regulate ROS production, communicates with the two formyl peptide receptors FPR2 and FPR1 to control the NADPH oxidase activity in neutrophils. The protein is G-protein coupled receptor 84 (Gpr84) of Mus musculus (Mouse).